Reading from the N-terminus, the 448-residue chain is Argininosuccinate synthase (448 aa).

ATP is bound by residues 17–25 (AFSGGLDTS) and Ala-43. Tyr-99 serves as a coordination point for L-citrulline. Gly-129 and Thr-131 together coordinate ATP. The L-aspartate site is built by Thr-131, Asn-135, and Asp-136. Asn-135 contacts L-citrulline. Asp-136 contacts ATP. L-citrulline-binding residues include Arg-139 and Ser-192. Asp-194 lines the ATP pocket. 3 residues coordinate L-citrulline: Thr-201, Glu-203, and Glu-280.

It belongs to the argininosuccinate synthase family. Type 2 subfamily. Homotetramer.

The protein localises to the cytoplasm. The enzyme catalyses L-citrulline + L-aspartate + ATP = 2-(N(omega)-L-arginino)succinate + AMP + diphosphate + H(+). It participates in amino-acid biosynthesis; L-arginine biosynthesis; L-arginine from L-ornithine and carbamoyl phosphate: step 2/3. The protein is Argininosuccinate synthase of Enterobacter sp. (strain 638).